The sequence spans 335 residues: 2-acylglycerol O-acyltransferase 2 (335 aa).

2 helical membrane-spanning segments follow: residues 24–44 (WAVS…LLLF) and 104–124 (YIMG…NFCT). N-linked (GlcNAc...) asparagine glycosylation occurs at asparagine 206.

It belongs to the diacylglycerol acyltransferase family.

The protein localises to the endoplasmic reticulum membrane. Its subcellular location is the cytoplasm. The protein resides in the perinuclear region. The catalysed reaction is a 2-acylglycerol + an acyl-CoA = a 1,2-diacylglycerol + CoA. It carries out the reaction a 2-acylglycerol + an acyl-CoA = a 1,2-diacyl-sn-glycerol + CoA. It catalyses the reaction a 2-acylglycerol + an acyl-CoA = a 2,3-diacyl-sn-glycerol + CoA. The enzyme catalyses a 1-acylglycerol + an acyl-CoA = a 1,2-diacylglycerol + CoA. The catalysed reaction is a 1-acylglycerol + an acyl-CoA = a 1,3-diacylglycerol + CoA. It carries out the reaction 1-O-alkylglycerol + an acyl-CoA = 1-O-alkyl-3-acylglycerol + CoA. It catalyses the reaction an acyl-CoA + a 1,2-diacyl-sn-glycerol = a triacyl-sn-glycerol + CoA. Its pathway is glycerolipid metabolism; triacylglycerol biosynthesis. Involved in glycerolipid synthesis and lipid metabolism. Catalyzes the formation of diacylglycerol, the precursor of triacylglycerol, by transferring the acyl chain of a fatty acyl-CoA to a monoacylglycerol. Plays a central role in absorption of dietary fat in the small intestine by catalyzing the resynthesis of triacylglycerol in enterocytes. Has a preference toward monoacylglycerols containing unsaturated fatty acids in an order of C18:3 &gt; C18:2 &gt; C18:1 &gt; C18:0 at sn-2. Able to use 1-monoalkylglycerol (1-MAkG, 1-O-alkylglycerol) as an acyl acceptor for the synthesis of monoalkyl-monoacylglycerol (MAMAG, 1-O-alkyl-3-acylglycerol or 1-O-alkyl-2-acylglycerol) and subsequently, with lower efficiency, may add another acyl chain producing monoalkyl-diacylglycerol (MADAG, 1-O-alkyl-2,3-diacylglycerol). Possesses weak but significant activity with diacylglycerol as substrate, producing triacylglycerol (triacyl-sn-glycerol). This is 2-acylglycerol O-acyltransferase 2 (mogat2) from Xenopus tropicalis (Western clawed frog).